Here is a 379-residue protein sequence, read N- to C-terminus: 3-dehydroquinate synthase (379 aa).

NAD(+)-binding positions include 67-72, 101-105, 125-126, Lys-138, and Lys-147; these read SGEKNK, GVVLD, and TT. Residues Glu-180, His-242, and His-258 each coordinate Zn(2+).

Belongs to the sugar phosphate cyclases superfamily. Dehydroquinate synthase family. NAD(+) is required as a cofactor. Requires Co(2+) as cofactor. The cofactor is Zn(2+).

The protein localises to the cytoplasm. It catalyses the reaction 7-phospho-2-dehydro-3-deoxy-D-arabino-heptonate = 3-dehydroquinate + phosphate. The protein operates within metabolic intermediate biosynthesis; chorismate biosynthesis; chorismate from D-erythrose 4-phosphate and phosphoenolpyruvate: step 2/7. Its function is as follows. Catalyzes the conversion of 3-deoxy-D-arabino-heptulosonate 7-phosphate (DAHP) to dehydroquinate (DHQ). The sequence is that of 3-dehydroquinate synthase from Chlamydia abortus (strain DSM 27085 / S26/3) (Chlamydophila abortus).